The sequence spans 236 residues: 2,3,4,5-tetrahydropyridine-2,6-dicarboxylate N-acetyltransferase (236 aa).

Belongs to the transferase hexapeptide repeat family. DapH subfamily.

The catalysed reaction is (S)-2,3,4,5-tetrahydrodipicolinate + acetyl-CoA + H2O = L-2-acetamido-6-oxoheptanedioate + CoA. Its pathway is amino-acid biosynthesis; L-lysine biosynthesis via DAP pathway; LL-2,6-diaminopimelate from (S)-tetrahydrodipicolinate (acetylase route): step 1/3. Its function is as follows. Catalyzes the transfer of an acetyl group from acetyl-CoA to tetrahydrodipicolinate. This is 2,3,4,5-tetrahydropyridine-2,6-dicarboxylate N-acetyltransferase from Clostridium beijerinckii (strain ATCC 51743 / NCIMB 8052) (Clostridium acetobutylicum).